Consider the following 134-residue polypeptide: Small ribosomal subunit protein uS8 (134 aa).

This sequence belongs to the universal ribosomal protein uS8 family. Part of the 30S ribosomal subunit. Contacts proteins S5 and S12.

In terms of biological role, one of the primary rRNA binding proteins, it binds directly to 16S rRNA central domain where it helps coordinate assembly of the platform of the 30S subunit. This is Small ribosomal subunit protein uS8 from Fervidobacterium nodosum (strain ATCC 35602 / DSM 5306 / Rt17-B1).